Here is a 735-residue protein sequence, read N- to C-terminus: Alpha-adducin (735 aa).

Methionine 1 carries the N-acetylmethionine modification. Residues 1-11 are compositionally biased toward low complexity; that stretch reads MNGDTRAAVVT. The disordered stretch occupies residues 1-21; sequence MNGDTRAAVVTSPPPTTAPHK. Position 12 is a phosphoserine (serine 12). Serine 59 carries the phosphoserine; by PKA modification. A Phosphoserine modification is found at serine 64. Threonine 331 carries the phosphothreonine modification. Phosphoserine is present on residues serine 334, serine 353, and serine 355. At threonine 358 the chain carries Phosphothreonine. Residues serine 364 and serine 366 each carry the phosphoserine modification. Serine 408 carries the phosphoserine; by PKA modification. Disordered stretches follow at residues 418-486 and 576-735; these read GHSF…SAVP and RREV…KSDS. Serine 427 is modified (phosphoserine). Threonine 429 carries the post-translational modification Phosphothreonine. Residue serine 431 is modified to Phosphoserine. The residue at position 436 (serine 436) is a Phosphoserine; by PKA. Threonine 445 is modified (phosphothreonine; by ROCK2). Serine 464 and serine 465 each carry phosphoserine. Threonine 480 carries the phosphothreonine; by ROCK2 modification. Serine 481 is subject to Phosphoserine; by PKA. Residues 576–601 show a composition bias toward basic and acidic residues; sequence RREVERKQKGSEENLDETREQKEKSP. A phosphoserine mark is found at serine 586, serine 600, and serine 605. Threonine 610 is subject to Phosphothreonine. At serine 613 the chain carries Phosphoserine. At threonine 614 the chain carries Phosphothreonine. A compositionally biased stretch (low complexity) spans 678-712; the sequence is EPASASAPGAEEVASPATEEGSPMDPGSDGSPGKS. 3 positions are modified to phosphoserine: serine 705, serine 708, and serine 712. Basic residues predominate over residues 713–735; that stretch reads PSKKKKKFRTPSFLKKSKKKSDS. Serine 714 bears the Phosphoserine; by PKC mark. The interaction with calmodulin stretch occupies residues 715–732; sequence KKKKKFRTPSFLKKSKKK. Serine 724 carries the post-translational modification Phosphoserine; by PKA and PKC.

Belongs to the aldolase class II family. Adducin subfamily. Heterodimer of an alpha and a beta subunit or an alpha and a gamma subunit.

The protein localises to the cytoplasm. The protein resides in the cytoskeleton. It is found in the cell membrane. In terms of biological role, membrane-cytoskeleton-associated protein that promotes the assembly of the spectrin-actin network. Binds to calmodulin. The protein is Alpha-adducin (Add1) of Rattus norvegicus (Rat).